The sequence spans 367 residues: Dual-specificity RNA methyltransferase RlmN (367 aa).

Catalysis depends on Glu91, which acts as the Proton acceptor. The Radical SAM core domain maps to 102–337; the sequence is GKVRMTQCLS…AIIRKSKGQD (236 aa). The cysteines at positions 109 and 342 are disulfide-linked. Positions 116, 120, and 123 each coordinate [4Fe-4S] cluster. Residues 169–170, Ser201, 223–225, and Asn299 contribute to the S-adenosyl-L-methionine site; these read GE and SLH. The active-site S-methylcysteine intermediate is Cys342.

This sequence belongs to the radical SAM superfamily. RlmN family. It depends on [4Fe-4S] cluster as a cofactor.

Its subcellular location is the cytoplasm. The enzyme catalyses adenosine(2503) in 23S rRNA + 2 reduced [2Fe-2S]-[ferredoxin] + 2 S-adenosyl-L-methionine = 2-methyladenosine(2503) in 23S rRNA + 5'-deoxyadenosine + L-methionine + 2 oxidized [2Fe-2S]-[ferredoxin] + S-adenosyl-L-homocysteine. It carries out the reaction adenosine(37) in tRNA + 2 reduced [2Fe-2S]-[ferredoxin] + 2 S-adenosyl-L-methionine = 2-methyladenosine(37) in tRNA + 5'-deoxyadenosine + L-methionine + 2 oxidized [2Fe-2S]-[ferredoxin] + S-adenosyl-L-homocysteine. Functionally, specifically methylates position 2 of adenine 2503 in 23S rRNA and position 2 of adenine 37 in tRNAs. m2A2503 modification seems to play a crucial role in the proofreading step occurring at the peptidyl transferase center and thus would serve to optimize ribosomal fidelity. The protein is Dual-specificity RNA methyltransferase RlmN of Nitratidesulfovibrio vulgaris (strain DSM 19637 / Miyazaki F) (Desulfovibrio vulgaris).